Consider the following 324-residue polypeptide: Glyoxylate/hydroxypyruvate reductase B (324 aa).

Catalysis depends on residues Arg237 and Glu266. Catalysis depends on His285, which acts as the Proton donor.

It belongs to the D-isomer specific 2-hydroxyacid dehydrogenase family. GhrB subfamily. In terms of assembly, homodimer.

It localises to the cytoplasm. It catalyses the reaction glycolate + NADP(+) = glyoxylate + NADPH + H(+). The catalysed reaction is (R)-glycerate + NAD(+) = 3-hydroxypyruvate + NADH + H(+). The enzyme catalyses (R)-glycerate + NADP(+) = 3-hydroxypyruvate + NADPH + H(+). In terms of biological role, catalyzes the NADPH-dependent reduction of glyoxylate and hydroxypyruvate into glycolate and glycerate, respectively. The protein is Glyoxylate/hydroxypyruvate reductase B of Salmonella paratyphi B (strain ATCC BAA-1250 / SPB7).